A 134-amino-acid polypeptide reads, in one-letter code: Profilin-3 (134 aa).

C13 and C118 are oxidised to a cystine. An Involved in PIP2 interaction motif is present at residues 84–100 (AVIRGKKGSGGITIKKT). At T114 the chain carries Phosphothreonine.

It belongs to the profilin family. In terms of assembly, occurs in many kinds of cells as a complex with monomeric actin in a 1:1 ratio. Phosphorylated by MAP kinases.

It is found in the cytoplasm. Its subcellular location is the cytoskeleton. Functionally, binds to actin and affects the structure of the cytoskeleton. At high concentrations, profilin prevents the polymerization of actin, whereas it enhances it at low concentrations. In Olea europaea (Common olive), this protein is Profilin-3.